The following is a 199-amino-acid chain: LPICPSGSVNCQVSLGELFDRAVKLSHYIHFLSSEMFNEFDERYAQGRGFITKAVNGCHNASLTTPEDKEQAQQIHHEDLLNLVLGVLRSWNDPLLHLVTEVQRIKEAPDTILWKAVEIEEQNKRLLEGMEKIIGRVQPGDTGNEVYSRWSGLPSLQLADEDSRLFAFYNLLHCGRRDSHKIDNYLKLLKCRLIHDSNC.

3 cysteine pairs are disulfide-bonded: Cys-4-Cys-11, Cys-58-Cys-174, and Cys-191-Cys-199. An N-linked (GlcNAc...) asparagine glycan is attached at Asn-60.

The protein belongs to the somatotropin/prolactin family. Post-translationally, glycosylated.

Its subcellular location is the secreted. The sequence is that of Prolactin-1 from Crocodylus novaeguineae (Crocodile).